Here is a 646-residue protein sequence, read N- to C-terminus: Long-chain fatty acid transport protein 1 (646 aa).

At 1-13 (MRAPGAGAASVVS) the chain is on the extracellular side. Residues 14–34 (LALLWLLGLPWTWSAAAALGV) traverse the membrane as a helical segment. Topologically, residues 35–646 (YVGSGGWRFL…TRICSGAFAL (612 aa)) are cytoplasmic. The segment at 191-475 (EVSGHLGKSL…YVSESATSKK (285 aa)) is sufficient for oligomerization. 246 to 257 (YIYTSGTTGLPK) contributes to the AMP binding site.

Belongs to the ATP-dependent AMP-binding enzyme family. As to quaternary structure, self-associates. May function as a homodimer. Interacts with EPRS1; mediates the translocation of SLC27A1 from the cytoplasm to the plasma membrane thereby increasing the uptake of long-chain fatty acids. Interacts with DGAT2 and this interaction is enhanced in the presence of ZFYVE1. As to expression, highest levels of expression are detected in muscle and adipose tissue small, intermediate levels in small intestine, and barely detectable in liver. Expressed in brain gray matter.

Its subcellular location is the cell membrane. The protein resides in the endomembrane system. It localises to the cytoplasm. The enzyme catalyses a fatty acid(in) = a fatty acid(out). The catalysed reaction is (9Z)-octadecenoate(out) = (9Z)-octadecenoate(in). It catalyses the reaction hexadecanoate(out) = hexadecanoate(in). It carries out the reaction (9Z,12Z)-octadecadienoate(out) = (9Z,12Z)-octadecadienoate(in). The enzyme catalyses (5Z,8Z,11Z,14Z)-eicosatetraenoate(out) = (5Z,8Z,11Z,14Z)-eicosatetraenoate(in). The catalysed reaction is a long-chain fatty acid + ATP + CoA = a long-chain fatty acyl-CoA + AMP + diphosphate. It catalyses the reaction (5Z,8Z,11Z,14Z)-eicosatetraenoate + ATP + CoA = (5Z,8Z,11Z,14Z)-eicosatetraenoyl-CoA + AMP + diphosphate. It carries out the reaction a very long-chain fatty acid + ATP + CoA = a very long-chain fatty acyl-CoA + AMP + diphosphate. The enzyme catalyses tetracosanoate + ATP + CoA = tetracosanoyl-CoA + AMP + diphosphate. Inhibited by Triacsin C. In terms of biological role, mediates the import of long-chain fatty acids (LCFA) into the cell by facilitating their transport at the plasma membrane. Also functions as an acyl-CoA ligase catalyzing the ATP-dependent formation of fatty acyl-CoA using LCFA and very-long-chain fatty acids (VLCFA) as substrates, which prevents fatty acid efflux from cells and might drive more fatty acid uptake. May act directly as a bona fide transporter, or alternatively, in a cytoplasmic or membrane-associated multimeric protein complex to trap and draw fatty acids towards accumulation. Plays a pivotal role in regulating available LCFA substrates from exogenous sources in tissues undergoing high levels of beta-oxidation or triglyceride synthesis. May be involved in regulation of cholesterol metabolism. Probably involved in fatty acid transport across the blood barrier. This Homo sapiens (Human) protein is Long-chain fatty acid transport protein 1.